The primary structure comprises 346 residues: Peroxidase 38 (346 aa).

The signal sequence occupies residues 1-22; the sequence is MHSSLIKLGFLLLLLQVSLSHA. Glutamine 23 is modified (pyrrolidone carboxylic acid). Cystine bridges form between cysteine 33–cysteine 113, cysteine 66–cysteine 71, cysteine 119–cysteine 323, and cysteine 199–cysteine 231. Histidine 64 (proton acceptor) is an active-site residue. Positions 65, 68, 70, 72, and 74 each coordinate Ca(2+). N-linked (GlcNAc...) asparagine glycosylation is present at asparagine 79. Proline 161 serves as a coordination point for substrate. Histidine 192 lines the heme b pocket. Position 193 (threonine 193) interacts with Ca(2+). Asparagine 236 carries N-linked (GlcNAc...) asparagine glycosylation. The Ca(2+) site is built by aspartate 244, threonine 247, and aspartate 252.

It belongs to the peroxidase family. Classical plant (class III) peroxidase subfamily. Requires heme b as cofactor. Ca(2+) serves as cofactor.

The protein resides in the secreted. It is found in the vacuole. It carries out the reaction 2 a phenolic donor + H2O2 = 2 a phenolic radical donor + 2 H2O. In terms of biological role, removal of H(2)O(2), oxidation of toxic reductants, biosynthesis and degradation of lignin, suberization, auxin catabolism, response to environmental stresses such as wounding, pathogen attack and oxidative stress. These functions might be dependent on each isozyme/isoform in each plant tissue. The protein is Peroxidase 38 (PER38) of Arabidopsis thaliana (Mouse-ear cress).